A 281-amino-acid polypeptide reads, in one-letter code: 3-deoxy-manno-octulosonate cytidylyltransferase (281 aa).

This sequence belongs to the KdsB family.

It localises to the cytoplasm. It catalyses the reaction 3-deoxy-alpha-D-manno-oct-2-ulosonate + CTP = CMP-3-deoxy-beta-D-manno-octulosonate + diphosphate. It participates in nucleotide-sugar biosynthesis; CMP-3-deoxy-D-manno-octulosonate biosynthesis; CMP-3-deoxy-D-manno-octulosonate from 3-deoxy-D-manno-octulosonate and CTP: step 1/1. Its pathway is bacterial outer membrane biogenesis; lipopolysaccharide biosynthesis. Its function is as follows. Activates KDO (a required 8-carbon sugar) for incorporation into bacterial lipopolysaccharide in Gram-negative bacteria. This chain is 3-deoxy-manno-octulosonate cytidylyltransferase, found in Xanthomonas campestris pv. campestris (strain B100).